We begin with the raw amino-acid sequence, 1072 residues long: Carbamoyl phosphate synthase large chain (1072 aa).

A carboxyphosphate synthetic domain region spans residues 1 to 401 (MPKYKDINKV…SLLKAVRSLE (401 aa)). Residues R129, R169, G175, G176, K208, L210, E215, G241, V242, H243, Q284, and E298 each coordinate ATP. The region spanning 133–327 (KRKMQEIGEP…IAKIAAKIAI (195 aa)) is the ATP-grasp 1 domain. Positions 284, 298, and 300 each coordinate Mg(2+). The Mn(2+) site is built by Q284, E298, and N300. An oligomerization domain region spans residues 402–544 (IKAYGLRLNN…YIYSTYGEED (143 aa)). Positions 545-929 (EVEIHDMPKV…ALYKALEGAG (385 aa)) are carbamoyl phosphate synthetic domain. The ATP-grasp 2 domain maps to 671-861 (SKLLRELNIN…MVKLAVEVAL (191 aa)). Positions 707, 746, 748, 752, 777, 778, 779, 780, 820, and 832 each coordinate ATP. Mg(2+)-binding residues include Q820, E832, and N834. Mn(2+) is bound by residues Q820, E832, and N834. Residues 930–1072 (LKIPKKGKIL…QKDNVKNLVL (143 aa)) form the MGS-like domain. Residues 930–1072 (LKIPKKGKIL…QKDNVKNLVL (143 aa)) form an allosteric domain region.

The protein belongs to the CarB family. As to quaternary structure, composed of two chains; the small (or glutamine) chain promotes the hydrolysis of glutamine to ammonia, which is used by the large (or ammonia) chain to synthesize carbamoyl phosphate. Tetramer of heterodimers (alpha,beta)4. Mg(2+) serves as cofactor. Requires Mn(2+) as cofactor.

It catalyses the reaction hydrogencarbonate + L-glutamine + 2 ATP + H2O = carbamoyl phosphate + L-glutamate + 2 ADP + phosphate + 2 H(+). The enzyme catalyses hydrogencarbonate + NH4(+) + 2 ATP = carbamoyl phosphate + 2 ADP + phosphate + 2 H(+). It participates in amino-acid biosynthesis; L-arginine biosynthesis; carbamoyl phosphate from bicarbonate: step 1/1. The protein operates within pyrimidine metabolism; UMP biosynthesis via de novo pathway; (S)-dihydroorotate from bicarbonate: step 1/3. Its function is as follows. Large subunit of the glutamine-dependent carbamoyl phosphate synthetase (CPSase). CPSase catalyzes the formation of carbamoyl phosphate from the ammonia moiety of glutamine, carbonate, and phosphate donated by ATP, constituting the first step of 2 biosynthetic pathways, one leading to arginine and/or urea and the other to pyrimidine nucleotides. The large subunit (synthetase) binds the substrates ammonia (free or transferred from glutamine from the small subunit), hydrogencarbonate and ATP and carries out an ATP-coupled ligase reaction, activating hydrogencarbonate by forming carboxy phosphate which reacts with ammonia to form carbamoyl phosphate. The polypeptide is Carbamoyl phosphate synthase large chain (Thermoanaerobacter pseudethanolicus (strain ATCC 33223 / 39E) (Clostridium thermohydrosulfuricum)).